A 327-amino-acid chain; its full sequence is Annexin A8 (327 aa).

Annexin repeat units lie at residues 21-92 (FNPD…ALMY), 93-164 (PPYR…CLLQ), 177-249 (GLAL…TVVK), and 253-324 (NVHS…NLVG). Ca(2+)-binding residues include Met-266, Gly-268, Gly-270, and Asp-310.

It belongs to the annexin family.

Its function is as follows. This protein is an anticoagulant protein that acts as an indirect inhibitor of the thromboplastin-specific complex, which is involved in the blood coagulation cascade. This chain is Annexin A8 (Anxa8), found in Rattus norvegicus (Rat).